The following is a 364-amino-acid chain: Fructose-bisphosphate aldolase B (364 aa).

A2 is subject to N-acetylalanine. K13 carries the N6-succinyllysine modification. S36 carries the phosphoserine modification. A Phosphothreonine modification is found at T39. R43 is a beta-D-fructose 1,6-bisphosphate binding site. The residue at position 119 (T119) is a Phosphothreonine. Position 121 is an N6-succinyllysine (K121). At S132 the chain carries Phosphoserine. E188 acts as the Proton acceptor in catalysis. K230 functions as the Schiff-base intermediate with dihydroxyacetone-P in the catalytic mechanism. S272, S276, S299, and S301 each carry phosphoserine. A beta-D-fructose 1,6-bisphosphate-binding site is contributed by 272–274 (SGG). R304 provides a ligand contact to beta-D-fructose 1,6-bisphosphate. Phosphoserine is present on S309. An N6-succinyllysine modification is found at K317.

The protein belongs to the class I fructose-bisphosphate aldolase family. As to quaternary structure, homotetramer. Interacts with BBS1, BBS2, BBS4 and BBS7. Forms a ternary complex with G6PD and TP53; this interaction is direct.

The protein resides in the cytoplasm. It localises to the cytosol. It is found in the cytoskeleton. The protein localises to the microtubule organizing center. Its subcellular location is the centrosome. The protein resides in the centriolar satellite. The catalysed reaction is beta-D-fructose 1,6-bisphosphate = D-glyceraldehyde 3-phosphate + dihydroxyacetone phosphate. The enzyme catalyses beta-D-fructose 1-phosphate = D-glyceraldehyde + dihydroxyacetone phosphate. Its pathway is carbohydrate degradation; glycolysis; D-glyceraldehyde 3-phosphate and glycerone phosphate from D-glucose: step 4/4. It participates in carbohydrate biosynthesis; gluconeogenesis. The protein operates within carbohydrate metabolism; fructose metabolism. In terms of biological role, catalyzes the aldol cleavage of fructose 1,6-biphosphate to form two triosephosphates dihydroxyacetone phosphate and D-glyceraldehyde 3-phosphate in glycolysis as well as the reverse stereospecific aldol addition reaction in gluconeogenesis. In fructolysis, metabolizes fructose 1-phosphate derived from the phosphorylation of dietary fructose by fructokinase into dihydroxyacetone phosphate and D-glyceraldehyde. Acts as an adapter independently of its enzymatic activity, exerts a tumor suppressor role by stabilizing the ternary complex with G6PD and TP53 to inhibit G6PD activity and keep oxidative pentose phosphate metabolism in check. This is Fructose-bisphosphate aldolase B (ALDOB) from Bos taurus (Bovine).